A 353-amino-acid chain; its full sequence is Rhodopsin (353 aa).

Residues 1–36 (MNGTEGPFFYVPMVNTTGIVRSPYDYPQYYLVSPAA) lie on the Extracellular side of the membrane. N-linked (GlcNAc...) asparagine glycans are attached at residues Asn2 and Asn15. A helical transmembrane segment spans residues 37–61 (YAALGAYMFLLILLGFPINFLTLYV). At 62–73 (TIEHKKLRTPLN) the chain is on the cytoplasmic side. The chain crosses the membrane as a helical span at residues 74–96 (YILLNLAVADLFMVFGGFTTTMY). Residues 97 to 110 (TSMHGYFVLGRLGC) lie on the Extracellular side of the membrane. Residues Cys110 and Cys187 are joined by a disulfide bond. A helical membrane pass occupies residues 111–133 (NMEGFFATLGGEIGLWSLVVLAV). Residues 134 to 136 (ERW) carry the 'Ionic lock' involved in activated form stabilization motif. The Cytoplasmic segment spans residues 134-152 (ERWLVVCKPISNFRFGENH). The helical transmembrane segment at 153 to 173 (AIMGLAFTWVMACSCAVPPLV) threads the bilayer. At 174-202 (GWSRYIPEGMQCSCGVDYYTRAEGFNNES) the chain is on the extracellular side. N-linked (GlcNAc...) asparagine glycosylation occurs at Asn200. The helical transmembrane segment at 203-224 (FVIYMFACHFIIPMCVVFFCYG) threads the bilayer. The Cytoplasmic segment spans residues 225–252 (RLLCAVKEAAAAQQESETTQRAEKEVTR). A helical membrane pass occupies residues 253-274 (MVVIMGIAFLICWCPYASVAWY). At 275–286 (IFTHQGSEFGPV) the chain is on the extracellular side. The chain crosses the membrane as a helical span at residues 287–308 (FMTLPAFFAKTSSVYNPLIYIL). Lys296 is subject to N6-(retinylidene)lysine. The Cytoplasmic segment spans residues 309–353 (MNKQFRHCMITTLCCGKNPFEEEEGASTASKTEASSVSSSSVSPA). Residues Cys322 and Cys323 are each lipidated (S-palmitoyl cysteine). Residues 331–353 (EEGASTASKTEASSVSSSSVSPA) form a disordered region. Residues 334–353 (ASTASKTEASSVSSSSVSPA) are compositionally biased toward low complexity.

It belongs to the G-protein coupled receptor 1 family. Opsin subfamily. Phosphorylated on some or all of the serine and threonine residues present in the C-terminal region. Post-translationally, contains one covalently linked retinal chromophore.

The protein localises to the membrane. It is found in the cell projection. Its subcellular location is the cilium. The protein resides in the photoreceptor outer segment. Functionally, photoreceptor required for image-forming vision at low light intensity. While most salt water fish species use retinal as chromophore, most freshwater fish use 3-dehydroretinal, or a mixture of retinal and 3-dehydroretinal. Light-induced isomerization of 11-cis to all-trans retinal triggers a conformational change that activates signaling via G-proteins. Subsequent receptor phosphorylation mediates displacement of the bound G-protein alpha subunit by arrestin and terminates signaling. The chain is Rhodopsin (rho) from Dicentrarchus labrax (European seabass).